The sequence spans 169 residues: Putative phosphoesterase SE_0715 (169 aa).

His-34 acts as the Proton donor in catalysis. 2 short sequence motifs (HXTX) span residues 34–37 (HITI) and 115–118 (HFTI). His-115 functions as the Proton acceptor in the catalytic mechanism.

It belongs to the 2H phosphoesterase superfamily. YjcG family.

This Staphylococcus epidermidis (strain ATCC 12228 / FDA PCI 1200) protein is Putative phosphoesterase SE_0715.